We begin with the raw amino-acid sequence, 35 residues long: Sperm-specific protein Phi-1 (35 aa).

Composition is skewed to basic residues over residues 1–17 and 25–35; these read PSPT…RSRS and AAKRAKSKTAK. Positions 1–35 are disordered; the sequence is PSPTRRSKSRSKSRSRSRSASAGKAAKRAKSKTAK.

Sperm.

The protein resides in the nucleus. It is found in the chromosome. Its function is as follows. Involved in nuclear basic protein transition: histones are replaced by spermatid specific proteins which are themselves replaced by protamines in late spermatids. This Mytilus californianus (California mussel) protein is Sperm-specific protein Phi-1.